Reading from the N-terminus, the 538-residue chain is Chaperonin GroEL 1 (538 aa).

ATP-binding positions include 29 to 32 (TLGP), 86 to 90 (DGTTT), glycine 413, and aspartate 494.

The protein belongs to the chaperonin (HSP60) family. As to quaternary structure, forms a cylinder of 14 subunits composed of two heptameric rings stacked back-to-back. Interacts with the co-chaperonin GroES.

It localises to the cytoplasm. The enzyme catalyses ATP + H2O + a folded polypeptide = ADP + phosphate + an unfolded polypeptide.. Its function is as follows. Together with its co-chaperonin GroES, plays an essential role in assisting protein folding. The GroEL-GroES system forms a nano-cage that allows encapsulation of the non-native substrate proteins and provides a physical environment optimized to promote and accelerate protein folding. The sequence is that of Chaperonin GroEL 1 from Mycolicibacterium paratuberculosis (strain ATCC BAA-968 / K-10) (Mycobacterium paratuberculosis).